The primary structure comprises 694 residues: uncharacterized protein (694 aa).

Residues 15-51 adopt a coiled-coil conformation; that stretch reads HKEKMELLDQFDNERKEWESQWKIMQKKIEELCREVK. 3 disordered regions span residues 259 to 286, 461 to 490, and 643 to 680; these read LKRN…EQAY, QNHS…QSND, and NASH…RRTT. 2 stretches are compositionally biased toward polar residues: residues 272–283 and 476–490; these read STSRNFPSSDSE and DTSS…QSND. The segment covering 663-677 has biased composition (low complexity); that stretch reads SRWASRSPSAPPALR.

This is an uncharacterized protein from Homo sapiens (Human).